Consider the following 86-residue polypeptide: Large ribosomal subunit protein bL31B (86 aa).

Belongs to the bacterial ribosomal protein bL31 family. Type B subfamily. Part of the 50S ribosomal subunit.

The polypeptide is Large ribosomal subunit protein bL31B (Citrobacter koseri (strain ATCC BAA-895 / CDC 4225-83 / SGSC4696)).